The sequence spans 549 residues: Acetyl-coenzyme A transporter 1 (549 aa).

Residues 1-12 show a composition bias toward basic and acidic residues; it reads MSPTISHKDSSR. The tract at residues 1 to 46 is disordered; that stretch reads MSPTISHKDSSRQRRPGNFSHSLDMKSGPLPPGGWDDSHLDSAGRE. At 1-74 the chain is on the cytoplasmic side; it reads MSPTISHKDS…PQSFRAELSS (74 aa). A phosphoserine mark is found at Ser22 and Ser42. The segment covering 36-46 has biased composition (basic and acidic residues); the sequence is DDSHLDSAGRE. The chain crosses the membrane as a helical span at residues 75–95; it reads ILLLLFLYVLQGIPLGLAGSI. Over 96–113 the chain is Extracellular; the sequence is PLILQSKNVSYTDQAFFS. Asn103 carries an N-linked (GlcNAc...) asparagine glycan. A helical membrane pass occupies residues 114-134; that stretch reads FVFWPFSLKLLWAPLVDAVYV. Residues 135 to 141 are Cytoplasmic-facing; it reads KNFGRRK. Residues 142–162 form a helical membrane-spanning segment; sequence SWLVPTQYILGLFMIYLSTQV. The Extracellular segment spans residues 163 to 175; that stretch reads DRLLGNTDDRTPD. The chain crosses the membrane as a helical span at residues 176–196; it reads VIALTVAFFLFEFLAATQDIA. Residues 197–217 are Cytoplasmic-facing; the sequence is VDGWALTMLSRENVGYASTCN. A helical transmembrane segment spans residues 218–238; that stretch reads SVGQTAGYFLGNVLFLALESA. Residues 239 to 256 lie on the Extracellular side of the membrane; the sequence is DFCNKYLRFQPQPRGIVT. A helical membrane pass occupies residues 257-277; the sequence is LSDFLFFWGTVFLITTTLVAL. The Cytoplasmic segment spans residues 278–299; sequence LKKENEVSVVKEETQGITDTYK. A helical transmembrane segment spans residues 300-320; the sequence is LLFAIIKMPAVLTFCLLILTA. Residues 321 to 343 lie on the Extracellular side of the membrane; sequence KIGFSAADAVTGLKLVEEGVPKE. Residues 344–364 form a helical membrane-spanning segment; it reads HLALLAVPMVPLQIILPLIIS. Residues 365-378 are Cytoplasmic-facing; it reads KYTAGPQPLNTFYK. A helical transmembrane segment spans residues 379-398; sequence AMPYRLLLGLEYALLVWWTP. The Extracellular portion of the chain corresponds to 399–404; that stretch reads KVEHQG. Residues 405-425 form a helical membrane-spanning segment; that stretch reads GFPIYYYIVVLLSYALHQVTV. Residues 426 to 508 lie on the Cytoplasmic side of the membrane; it reads YSMYVSIMAF…LGGSCVTALD (83 aa). A helical membrane pass occupies residues 509–529; that stretch reads GYYVESIICVFIGFGWWFFLG. The Extracellular segment spans residues 530–549; the sequence is PKFKKLQDEGSSSWKCKRNN.

This sequence belongs to the SLC33A transporter family. Homodimerizes. In terms of tissue distribution, ubiquitous. Detected in heart, brain, placenta, lung, liver, skeletal muscle, kidney and pancreas. With strongest signals in pancreas.

Its subcellular location is the endoplasmic reticulum membrane. It carries out the reaction acetyl-CoA(in) = acetyl-CoA(out). Acetyl-CoA transporter that mediates active acetyl-CoA import through the endoplasmic reticulum (ER) membrane into the ER lumen where specific ER-based acetyl-CoA:lysine acetyltransferases are responsible for the acetylation of ER-based protein substrates, such as BACE1. Necessary for O-acetylation of gangliosides. The chain is Acetyl-coenzyme A transporter 1 from Homo sapiens (Human).